The following is a 1847-amino-acid chain: Peripheral-type benzodiazepine receptor-associated protein 1 (1847 aa).

Disordered stretches follow at residues E57–T81, N282–V318, and S560–S626. Low complexity-rich tracts occupy residues G294–G310 and S600–S613. Positions A651–D718 constitute an SH3 1 domain. Positions E728 to L787 are disordered. Residues S744–S757 are compositionally biased toward gly residues. 3 consecutive Fibronectin type-III domains span residues V789 to G880, V882 to A974, and A979 to A1077. 5 disordered regions span residues L1107–D1174, D1191–R1215, N1240–Q1307, F1322–L1478, and P1514–D1616. Polar residues predominate over residues T1122–M1133. Over residues L1203–R1215 the composition is skewed to basic and acidic residues. Over residues D1253–E1266 the composition is skewed to acidic residues. Polar residues predominate over residues W1272 to G1284. Acidic residues-rich tracts occupy residues C1296–L1305 and P1325–E1335. The segment covering P1340–P1352 has biased composition (low complexity). Composition is skewed to basic and acidic residues over residues R1412–S1421 and A1546–G1578. The SH3 2 domain occupies L1617–V1685. Disordered regions lie at residues P1701–P1747 and L1818–C1847. In terms of domain architecture, SH3 3 spans K1756–P1823.

This sequence belongs to the RIMBP family. Interacts with RIMS1 and RIMS2. Interacts with TSPO. Interacts with CACNA1A. In terms of tissue distribution, specifically expressed in brain. High expression level in the limbic system such as the nucleus accumbens, septum, and hippocampus, as well as on the cerebellum and pineal gland. Abundant in the CA1 region of the hippocampus.

Its subcellular location is the cytoplasm. The protein resides in the mitochondrion. Required for synaptic transmission regulation. It probably controls the recruitement of voltage-gated calcium channels to the presynaptic membrane, and modulates neurotransmitter release. This is Peripheral-type benzodiazepine receptor-associated protein 1 from Rattus norvegicus (Rat).